Here is a 270-residue protein sequence, read N- to C-terminus: MMLRLLSSLLLVAVASGYGPPSSRPSSRVVNGEDAVPYSWPWQVSLQYEKSGSFYHTCGGSLIAPDWVVTAGHCISSSRTYQVVLGEYDRAVKEGPEQVIPINSGDLFVHPLWNRSCVACGNDIALIKLSRSAQLGDAVQLASLPPAGDILPNETPCYITGWGRLYTNGPLPDKLQEALLPVVDYEHCSRWNWWGSSVKKTMVCAGGDIRSGCNGDSGGPLNCPTEDGGWQVHGVTSFVSAFGCNTRRKPTVFTRVSAFIDWIEETIASH.

The segment at residues 1–15 is a signal peptide (or 16); the sequence is MMLRLLSSLLLVAVA. Residues 16–28 constitute a propeptide, activation peptide; sequence SGYGPPSSRPSSR. Residues 29 to 268 enclose the Peptidase S1 domain; it reads VVNGEDAVPY…FIDWIEETIA (240 aa). Cys-58 and Cys-74 are oxidised to a cystine. The Charge relay system role is filled by His-73. Residue Asn-114 is glycosylated (N-linked (GlcNAc...) asparagine). An intrachain disulfide couples Cys-117 to Cys-120. The Charge relay system role is filled by Asp-123. Intrachain disulfides connect Cys-157–Cys-223, Cys-188–Cys-204, and Cys-213–Cys-244. Residue Ser-217 is the Charge relay system of the active site.

This sequence belongs to the peptidase S1 family. Elastase subfamily. In terms of tissue distribution, pancreas. Not detectable in keratinocytes.

It catalyses the reaction Preferential cleavage: Ala-|-Xaa. Does not hydrolyze elastin.. Functionally, efficient protease with alanine specificity but only little elastolytic activity. The chain is Chymotrypsin-like elastase family member 3B (CELA3B) from Homo sapiens (Human).